Consider the following 606-residue polypeptide: V-type proton ATPase catalytic subunit A (606 aa).

Ala2 is subject to N-acetylalanine. An ATP-binding site is contributed by 240-247 (AFGCGKTV).

Belongs to the ATPase alpha/beta chains family. As to quaternary structure, V-ATPase is a heteromultimeric enzyme made up of two complexes: the ATP-hydrolytic V1 complex and the proton translocation V0 complex. The V1 complex consists of three catalytic AB heterodimers that form a heterohexamer, three peripheral stalks each consisting of EG heterodimers, one central rotor including subunits D and F, and the regulatory subunits C and H. The proton translocation complex V0 consists of the proton transport subunit a, a ring of proteolipid subunits c9c'', rotary subunit d, subunits e and f, and the accessory subunits vah-19/Ac45 and vah-20/PRR. Expressed in proximal but not distal germ cells.

The enzyme catalyses ATP + H2O + 4 H(+)(in) = ADP + phosphate + 5 H(+)(out). Its activity is regulated as follows. ATP hydrolysis occurs at the interface between the nucleotide-binding domains of subunits A and B. ATP hydrolysis triggers a conformational change in the subunits D and F, which induces a shift of subunit d. The c-ring is subsequently rotated and results in a continuous proton translocation across the membrane. Functionally, catalytic subunit of the V1 complex of vacuolar(H+)-ATPase (V-ATPase), a multisubunit enzyme composed of a peripheral complex (V1) that hydrolyzes ATP and a membrane integral complex (V0) that translocates protons. V-ATPase is responsible for acidifying and maintaining the pH of intracellular compartments and in some cell types, is targeted to the plasma membrane, where it is responsible for acidifying the extracellular environment. Required along with other vacuolar ATPase components for the removal of protein aggregates which form in immature oocytes in the distal gonad. This removal occurs as the oocytes mature and move to the proximal gonad, is triggered by the introduction of sperm through mating and occurs before fertilization. The introduction of sperm triggers V-ATPase accumulation in proximal oocytes and induces lysosomal acidification which leads to engulfing of protein aggregates by lysosomes and subsequent clearance of the aggregates. Lysosomal acidification also leads to changes in mitochondrial morphology and function. Mitochondria in distal immature oocytes are fragmented, produce high levels of reactive oxygen species (ROS) and have high membrane potential, indicative of metabolic inactivity. In contrast, mitochondria in proximal mature oocytes are tubular with lower ROS levels and membrane potential, indicative of an active metabolic state required for aggregate mobilization before clearance. Involved in receptor-mediated endocytosis. The polypeptide is V-type proton ATPase catalytic subunit A (Caenorhabditis elegans).